Here is a 94-residue protein sequence, read N- to C-terminus: Parvalbumin beta 4 (94 aa).

Alanine 1 carries the post-translational modification N-acetylalanine. 2 consecutive EF-hand domains span residues 36–63 (FFAI…FSAG) and 67–94 (LSDA…EFAA). 11 residues coordinate Ca(2+): aspartate 41, aspartate 43, serine 45, phenylalanine 47, glutamate 49, glutamate 52, aspartate 80, aspartate 82, aspartate 84, methionine 86, and glutamate 91.

This sequence belongs to the parvalbumin family.

In terms of biological role, in muscle, parvalbumin is thought to be involved in relaxation after contraction. It binds two calcium ions. This chain is Parvalbumin beta 4, found in Merluccius bilinearis (Silver hake).